Consider the following 241-residue polypeptide: Large ribosomal subunit protein uL3 (241 aa).

Disordered stretches follow at residues 139–164 (VSHR…KMPG) and 215–241 (DAPK…QEGA). Residue Gln-151 is modified to N5-methylglutamine.

This sequence belongs to the universal ribosomal protein uL3 family. In terms of assembly, part of the 50S ribosomal subunit. Forms a cluster with proteins L14 and L19. Methylated by PrmB.

Functionally, one of the primary rRNA binding proteins, it binds directly near the 3'-end of the 23S rRNA, where it nucleates assembly of the 50S subunit. The sequence is that of Large ribosomal subunit protein uL3 from Rhodopseudomonas palustris (strain BisB5).